A 35-amino-acid polypeptide reads, in one-letter code: Photosystem II reaction center protein T (35 aa).

The chain crosses the membrane as a helical span at residues 3 to 23; that stretch reads ALVYTFLLVSTLGIIFFAIFF.

It belongs to the PsbT family. As to quaternary structure, PSII is composed of 1 copy each of membrane proteins PsbA, PsbB, PsbC, PsbD, PsbE, PsbF, PsbH, PsbI, PsbJ, PsbK, PsbL, PsbM, PsbT, PsbY, PsbZ, Psb30/Ycf12, at least 3 peripheral proteins of the oxygen-evolving complex and a large number of cofactors. It forms dimeric complexes.

Its subcellular location is the plastid. It is found in the chloroplast thylakoid membrane. In terms of biological role, found at the monomer-monomer interface of the photosystem II (PS II) dimer, plays a role in assembly and dimerization of PSII. PSII is a light-driven water plastoquinone oxidoreductase, using light energy to abstract electrons from H(2)O, generating a proton gradient subsequently used for ATP formation. In Pinus thunbergii (Japanese black pine), this protein is Photosystem II reaction center protein T.